Here is a 505-residue protein sequence, read N- to C-terminus: Trans-cinnamate 4-monooxygenase (505 aa).

A helical transmembrane segment spans residues 3–23; sequence LLLLEKTLLGLFIAAITAIAI. Residues 213-218 and alanine 306 each bind (E)-cinnamate; that span reads RSRLAQ. Cysteine 447 contributes to the heme binding site.

This sequence belongs to the cytochrome P450 family. It depends on heme as a cofactor.

Its subcellular location is the membrane. The enzyme catalyses (E)-cinnamate + reduced [NADPH--hemoprotein reductase] + O2 = (E)-4-coumarate + oxidized [NADPH--hemoprotein reductase] + H2O + H(+). The protein operates within phenylpropanoid metabolism; trans-4-coumarate biosynthesis; trans-4-coumarate from trans-cinnamate: step 1/1. Its function is as follows. Catalyzes the first oxidative step of the phenylpropanoid pathway in higher plants by transforming trans-cinnamate into p-coumarate. The compounds formed by this pathway are essential components for lignification, pollination, and defense against ultraviolet light, predators and pathogens. This is Trans-cinnamate 4-monooxygenase (CYP73A14) from Glycyrrhiza echinata (Licorice).